Consider the following 212-residue polypeptide: Adenylate kinase (212 aa).

ATP is bound at residue 10–15 (GAGKGT). Residues 30–59 (STGDMFRAAMVNQTEMGVLAKSYIDKGELV) are NMP. Residues Thr-31, Arg-36, 57–59 (ELV), 86–89 (GYPR), and Gln-93 each bind AMP. The interval 127–159 (GRIIHRVTGETFHKVFNPPVDYKEEDYYQREDD) is LID. Residues Arg-128 and 137–138 (TF) contribute to the ATP site. Residues Arg-156 and Arg-167 each coordinate AMP. Gln-195 provides a ligand contact to ATP.

It belongs to the adenylate kinase family. Monomer.

It localises to the cytoplasm. The enzyme catalyses AMP + ATP = 2 ADP. It participates in purine metabolism; AMP biosynthesis via salvage pathway; AMP from ADP: step 1/1. Its function is as follows. Catalyzes the reversible transfer of the terminal phosphate group between ATP and AMP. Plays an important role in cellular energy homeostasis and in adenine nucleotide metabolism. The protein is Adenylate kinase of Streptococcus pneumoniae (strain 70585).